The chain runs to 241 residues: Octanoyltransferase (241 aa).

Residues 38-227 (AGGPDTLLLL…AVCNALDGAL (190 aa)) enclose the BPL/LPL catalytic domain. Substrate contacts are provided by residues 85-92 (RGGKITWH), 157-159 (AIG), and 170-172 (GFA). Cys-188 (acyl-thioester intermediate) is an active-site residue.

This sequence belongs to the LipB family.

It is found in the cytoplasm. It catalyses the reaction octanoyl-[ACP] + L-lysyl-[protein] = N(6)-octanoyl-L-lysyl-[protein] + holo-[ACP] + H(+). It functions in the pathway protein modification; protein lipoylation via endogenous pathway; protein N(6)-(lipoyl)lysine from octanoyl-[acyl-carrier-protein]: step 1/2. Catalyzes the transfer of endogenously produced octanoic acid from octanoyl-acyl-carrier-protein onto the lipoyl domains of lipoate-dependent enzymes. Lipoyl-ACP can also act as a substrate although octanoyl-ACP is likely to be the physiological substrate. In Mycobacterium ulcerans (strain Agy99), this protein is Octanoyltransferase.